The chain runs to 138 residues: Superoxide dismutase [Mn] (138 aa).

Residues His1, His49, Asp133, and His137 each coordinate Mn(2+).

Belongs to the iron/manganese superoxide dismutase family. The cofactor is Mn(2+).

It carries out the reaction 2 superoxide + 2 H(+) = H2O2 + O2. Destroys superoxide anion radicals which are normally produced within the cells and which are toxic to biological systems. This chain is Superoxide dismutase [Mn] (sodA), found in Mycobacterium malmoense.